Consider the following 220-residue polypeptide: MNYLFVFLALSAAVTFANAECNKIQCRMFCKFGFQQDENGCDICKCAERPEKKCSNRYCKMLCPEGFQVDANGCQICRCKRSALEAPEKKCDGLKQCKMHCENGFVRDENGCPKCECSKCKQFQCLIFCPHGNEVDENGCKTCKCKAAPEKKKCDDLKQCRMFCENGFVRDENGCKKCECNKCKNFICQIFCEYGNVVDENGCKTCKCNSKPLKLSLHCR.

The first 19 residues, 1-19 (MNYLFVFLALSAAVTFANA), serve as a signal peptide directing secretion. Antistasin-like domains follow at residues 21 to 46 (CNKIQCRMFCKFGFQQDENGCDICKC), 54 to 79 (CSNRYCKMLCPEGFQVDANGCQICRC), 91 to 117 (CDGLKQCKMHCENGFVRDENGCPKCEC), 120 to 145 (CKQFQCLIFCPHGNEVDENGCKTCKC), 154 to 180 (CDDLKQCRMFCENGFVRDENGCKKCEC), and 183 to 208 (CKNFICQIFCEYGNVVDENGCKTCKC).

The protein belongs to the protease inhibitor I15 (antistasin) family. In terms of tissue distribution, gland cells. It is more strongly expressed in the head than in the gastric tissue.

Its subcellular location is the secreted. Functionally, this highly disulfide-bonded protein is a potent inhibitor of factor Xa. Facilitates digestion of tissues and may also protect the gastric tissues from its own digestive enzymes. May have therapeutic utility as an anticoagulant. Also exhibits a strong metastatic activity. The polypeptide is Antistasin (Hydra vulgaris (Hydra)).